The following is a 560-amino-acid chain: Alpha-keto-acid decarboxylase (560 aa).

Glu-61 is a thiamine diphosphate binding site. A thiamine pyrophosphate binding region spans residues 396–478 (TSFYGMADHR…VVVNNDGYTV (83 aa)). Asp-446, Asn-473, and Gly-475 together coordinate Mg(2+).

It belongs to the TPP enzyme family. A metal cation serves as cofactor. Thiamine diphosphate is required as a cofactor.

In terms of biological role, decarboxylates branched-chain and aromatic alpha-keto acids to aldehydes. The chain is Alpha-keto-acid decarboxylase (kdc) from Mycobacterium tuberculosis (strain CDC 1551 / Oshkosh).